Here is a 36-residue protein sequence, read N- to C-terminus: Lambda-hexatoxin-Hv1a (36 aa).

4 disulfide bridges follow: Cys3–Cys17, Cys10–Cys22, Cys13–Cys14, and Cys16–Cys33.

It belongs to the neurotoxin 11 (kappa toxin) family. In terms of tissue distribution, expressed by the venom gland.

It localises to the secreted. In terms of biological role, this excitatory toxin inhibits insect calcium-activated potassium (KCa) channels (Slo-type). This is Lambda-hexatoxin-Hv1a from Hadronyche versuta (Blue mountains funnel-web spider).